We begin with the raw amino-acid sequence, 1408 residues long: DNA-directed RNA polymerase subunit beta' (1408 aa).

Zn(2+) is bound by residues Cys70, Cys72, Cys85, and Cys88. Mg(2+) is bound by residues Asp460, Asp462, and Asp464. The Zn(2+) site is built by Cys822, Cys896, Cys903, and Cys906. Positions 1386-1408 (DTGEAPPLSEEETGEIRNSGYAV) are disordered.

It belongs to the RNA polymerase beta' chain family. As to quaternary structure, the RNAP catalytic core consists of 2 alpha, 1 beta, 1 beta' and 1 omega subunit. When a sigma factor is associated with the core the holoenzyme is formed, which can initiate transcription. Requires Mg(2+) as cofactor. Zn(2+) is required as a cofactor.

It catalyses the reaction RNA(n) + a ribonucleoside 5'-triphosphate = RNA(n+1) + diphosphate. DNA-dependent RNA polymerase catalyzes the transcription of DNA into RNA using the four ribonucleoside triphosphates as substrates. This chain is DNA-directed RNA polymerase subunit beta', found in Nitrosospira multiformis (strain ATCC 25196 / NCIMB 11849 / C 71).